We begin with the raw amino-acid sequence, 334 residues long: Phosphate acyltransferase (334 aa).

This sequence belongs to the PlsX family. As to quaternary structure, homodimer. Probably interacts with PlsY.

It localises to the cytoplasm. It carries out the reaction a fatty acyl-[ACP] + phosphate = an acyl phosphate + holo-[ACP]. It participates in lipid metabolism; phospholipid metabolism. Its function is as follows. Catalyzes the reversible formation of acyl-phosphate (acyl-PO(4)) from acyl-[acyl-carrier-protein] (acyl-ACP). This enzyme utilizes acyl-ACP as fatty acyl donor, but not acyl-CoA. The sequence is that of Phosphate acyltransferase from Desulfitobacterium hafniense (strain DSM 10664 / DCB-2).